The following is a 178-amino-acid chain: Stathmin-2-B (178 aa).

Residues 38–178 (DDMEVKQLNK…KNKEQLELSG (141 aa)) form the SLD domain. Positions 75–178 (KRKDVSLEEI…KNKEQLELSG (104 aa)) form a coiled coil.

The protein belongs to the stathmin family. Nervous tissue.

It localises to the cytoplasm. It is found in the membrane. The protein resides in the cell projection. The protein localises to the lamellipodium. The chain is Stathmin-2-B (stmn2-b) from Xenopus laevis (African clawed frog).